Consider the following 197-residue polypeptide: Nucleoid occlusion factor SlmA (197 aa).

The HTH tetR-type domain maps to 7–67 (INRREHILQC…GLIDFIEESL (61 aa)). Positions 30–49 (TTAKLAAEVGVSEAALYRHF) form a DNA-binding region, H-T-H motif.

The protein belongs to the nucleoid occlusion factor SlmA family. In terms of assembly, homodimer. Interacts with FtsZ.

It is found in the cytoplasm. The protein localises to the nucleoid. In terms of biological role, required for nucleoid occlusion (NO) phenomenon, which prevents Z-ring formation and cell division over the nucleoid. Acts as a DNA-associated cell division inhibitor that binds simultaneously chromosomal DNA and FtsZ, and disrupts the assembly of FtsZ polymers. SlmA-DNA-binding sequences (SBS) are dispersed on non-Ter regions of the chromosome, preventing FtsZ polymerization at these regions. The protein is Nucleoid occlusion factor SlmA of Shewanella loihica (strain ATCC BAA-1088 / PV-4).